Here is a 192-residue protein sequence, read N- to C-terminus: Ion-translocating oxidoreductase complex subunit B (192 aa).

Positions 1–26 (MNTIWIAVGALALLGLVFGAILGYAS) are hydrophobic. The 60-residue stretch at 32–91 (EDDPVVEKIDAILPQSQCGQCGYPGCRPYAEAVGLQGEKINRCAPGGEAVMLKIAELLNV) folds into the 4Fe-4S domain. Residues C49, C52, C57, C74, C117, C120, C123, C127, C147, C150, C153, and C157 each contribute to the [4Fe-4S] cluster site. 4Fe-4S ferredoxin-type domains follow at residues 108-137 (MLAV…GATR) and 138-167 (AMHT…LRPV).

Belongs to the 4Fe4S bacterial-type ferredoxin family. RnfB subfamily. As to quaternary structure, the complex is composed of six subunits: RsxA, RsxB, RsxC, RsxD, RsxE and RsxG. Requires [4Fe-4S] cluster as cofactor.

It is found in the cell inner membrane. Functionally, part of a membrane-bound complex that couples electron transfer with translocation of ions across the membrane. Required to maintain the reduced state of SoxR. In Salmonella newport (strain SL254), this protein is Ion-translocating oxidoreductase complex subunit B.